Consider the following 209-residue polypeptide: Protein N-terminal glutamine amidohydrolase (209 aa).

Catalysis depends on residues cysteine 30, histidine 83, and aspartate 99.

The protein belongs to the NTAQ1 family. Monomer. In terms of tissue distribution, widely expressed.

The protein localises to the cytoplasm. It localises to the cytosol. It is found in the nucleus. It catalyses the reaction N-terminal L-glutaminyl-[protein] + H2O = N-terminal L-glutamyl-[protein] + NH4(+). In terms of biological role, mediates the side-chain deamidation of N-terminal glutamine residues to glutamate, an important step in N-end rule pathway of protein degradation. Conversion of the resulting N-terminal glutamine to glutamate renders the protein susceptible to arginylation, polyubiquitination and degradation as specified by the N-end rule. Does not act on substrates with internal or C-terminal glutamine and does not act on non-glutamine residues in any position. Does not deaminate acetylated N-terminal glutamine. With the exception of proline, all tested second-position residues on substrate peptides do not greatly influence the activity. In contrast, a proline at position 2, virtually abolishes deamidation of N-terminal glutamine. The protein is Protein N-terminal glutamine amidohydrolase (Ntaq1) of Mus musculus (Mouse).